The chain runs to 431 residues: MSLQSKHFIQALKNGVVPATGCTEPIAVAFGAATCMAQLTNREIQAIEVHVSPNVMKNALAVMVPGTGEPGLLVAAAAGAIAGDATVGLSVIEGLRATDLPTILDLAHSGKVTAKTALVPDDLYVEVTIKDLENTVTVAIAGSHTNIFSLKKDDQILIDHPRPAAHASSESKQFLQTMNFKAVWDFAMNEPLEHLRFMKEAHTLNLALAQDGFTHDYGLQLGQSINGAKRNHFGSGTENDLGNRMIAYAAAASDARMGGAQLPAMSNSGSGNQGITATIPVSVAADAVQATEEQLIRAQALSHLTALYIHSFLPVLSAFCATDSAAMGAAAGVVYLYDGTYEDACHAIQNMAGDAAGMICDGAGCACAMKVATAVSSMYRGVNLALQGIVIPNSNGIVCPTIDETIHGIGRLGTEGLRETDPVILDIMLNK.

This sequence belongs to the UPF0597 family.

The sequence is that of UPF0597 protein LCA_0156 from Latilactobacillus sakei subsp. sakei (strain 23K) (Lactobacillus sakei subsp. sakei).